A 600-amino-acid chain; its full sequence is Adenine deaminase (600 aa).

The protein belongs to the metallo-dependent hydrolases superfamily. Adenine deaminase family. It depends on Mn(2+) as a cofactor.

The enzyme catalyses adenine + H2O + H(+) = hypoxanthine + NH4(+). This chain is Adenine deaminase, found in Chelativorans sp. (strain BNC1).